A 431-amino-acid chain; its full sequence is Enolase (431 aa).

(2R)-2-phosphoglycerate is bound at residue Gln-166. Glu-208 serves as the catalytic Proton donor. Residues Asp-245, Glu-288, and Asp-315 each coordinate Mg(2+). Residues Lys-340, Arg-369, Ser-370, and Lys-391 each contribute to the (2R)-2-phosphoglycerate site. Lys-340 acts as the Proton acceptor in catalysis.

It belongs to the enolase family. It depends on Mg(2+) as a cofactor.

It is found in the cytoplasm. The protein resides in the secreted. Its subcellular location is the cell surface. It catalyses the reaction (2R)-2-phosphoglycerate = phosphoenolpyruvate + H2O. Its pathway is carbohydrate degradation; glycolysis; pyruvate from D-glyceraldehyde 3-phosphate: step 4/5. Catalyzes the reversible conversion of 2-phosphoglycerate (2-PG) into phosphoenolpyruvate (PEP). It is essential for the degradation of carbohydrates via glycolysis. The sequence is that of Enolase from Clostridium botulinum (strain Eklund 17B / Type B).